Here is a 561-residue protein sequence, read N- to C-terminus: Probable oligo-1,6-glucosidase 2 (561 aa).

Residue D199 is the Nucleophile of the active site. E255 (proton donor) is an active-site residue.

This sequence belongs to the glycosyl hydrolase 13 family.

It is found in the cytoplasm. The catalysed reaction is Hydrolysis of (1-&gt;6)-alpha-D-glucosidic linkages in some oligosaccharides produced from starch and glycogen by alpha-amylase, and in isomaltose.. The chain is Probable oligo-1,6-glucosidase 2 (ycdG) from Bacillus subtilis (strain 168).